Consider the following 421-residue polypeptide: Enolase (421 aa).

The active-site Proton donor is Glu207. Residues Asp244, Glu285, and Asp312 each coordinate Mg(2+). Catalysis depends on Lys337, which acts as the Proton acceptor. (2R)-2-phosphoglycerate-binding residues include Lys337, Arg366, Ser367, and Lys388.

It belongs to the enolase family. Requires Mg(2+) as cofactor.

The protein localises to the cytoplasm. The protein resides in the secreted. Its subcellular location is the cell surface. The catalysed reaction is (2R)-2-phosphoglycerate = phosphoenolpyruvate + H2O. It participates in carbohydrate degradation; glycolysis; pyruvate from D-glyceraldehyde 3-phosphate: step 4/5. In terms of biological role, catalyzes the reversible conversion of 2-phosphoglycerate (2-PG) into phosphoenolpyruvate (PEP). It is essential for the degradation of carbohydrates via glycolysis. The protein is Enolase of Ehrlichia ruminantium (strain Gardel).